The primary structure comprises 163 residues: Lipoprotein signal peptidase (163 aa).

3 consecutive transmembrane segments (helical) span residues 7–27, 64–84, and 99–119; these read LSFL…KYLV, WQKY…VYLL, and ALII…GFVV. Active-site residues include aspartate 120 and aspartate 138. The helical transmembrane segment at 133 to 153 threads the bilayer; that stretch reads VFNVADIAICVGVGLLILDSF.

Belongs to the peptidase A8 family.

Its subcellular location is the cell inner membrane. The catalysed reaction is Release of signal peptides from bacterial membrane prolipoproteins. Hydrolyzes -Xaa-Yaa-Zaa-|-(S,diacylglyceryl)Cys-, in which Xaa is hydrophobic (preferably Leu), and Yaa (Ala or Ser) and Zaa (Gly or Ala) have small, neutral side chains.. It participates in protein modification; lipoprotein biosynthesis (signal peptide cleavage). Its function is as follows. This protein specifically catalyzes the removal of signal peptides from prolipoproteins. The protein is Lipoprotein signal peptidase of Actinobacillus succinogenes (strain ATCC 55618 / DSM 22257 / CCUG 43843 / 130Z).